The sequence spans 138 residues: MPPAKKAAAAPKKGQKTRRREKKNVPHGAAHIKSTFNNTIVTITDPQGNVIAWASSGHVGFKGSRKSTPFAAQLAAENAARKAQEHGVRKVDVFVKGPGSGRETAIRSLQAAGLEVGAISDVTPQPHNGVRPPKRRRV.

The span at 1–12 (MPPAKKAAAAPK) shows a compositional bias: low complexity. The disordered stretch occupies residues 1 to 27 (MPPAKKAAAAPKKGQKTRRREKKNVPH). The span at 13 to 22 (KGQKTRRREK) shows a compositional bias: basic residues.

The protein belongs to the universal ribosomal protein uS11 family. Part of the 30S ribosomal subunit. Interacts with proteins S7 and S18. Binds to IF-3.

Its function is as follows. Located on the platform of the 30S subunit, it bridges several disparate RNA helices of the 16S rRNA. Forms part of the Shine-Dalgarno cleft in the 70S ribosome. This Mycolicibacterium paratuberculosis (strain ATCC BAA-968 / K-10) (Mycobacterium paratuberculosis) protein is Small ribosomal subunit protein uS11.